Consider the following 227-residue polypeptide: PKHD-type hydroxylase Bxeno_B2756 (227 aa).

Positions 80-179 constitute a Fe2OG dioxygenase domain; it reads QVYPPLFNRY…RVASFFWVQS (100 aa). Fe cation-binding residues include His-98, Asp-100, and His-160. Residue Arg-170 participates in 2-oxoglutarate binding.

The cofactor is Fe(2+). It depends on L-ascorbate as a cofactor.

The polypeptide is PKHD-type hydroxylase Bxeno_B2756 (Paraburkholderia xenovorans (strain LB400)).